Here is a 428-residue protein sequence, read N- to C-terminus: Adenylosuccinate synthetase (428 aa).

GTP-binding positions include G12–K18 and G40–T42. D13 serves as the catalytic Proton acceptor. The Mg(2+) site is built by D13 and G40. Residues D13 to K16, N38 to H41, T130, R144, Q225, T240, and R304 each bind IMP. The active-site Proton donor is H41. T300–R306 lines the substrate pocket. GTP is bound by residues R306, K332–D334, and S414–G416.

This sequence belongs to the adenylosuccinate synthetase family. As to quaternary structure, homodimer. It depends on Mg(2+) as a cofactor.

It is found in the cytoplasm. It catalyses the reaction IMP + L-aspartate + GTP = N(6)-(1,2-dicarboxyethyl)-AMP + GDP + phosphate + 2 H(+). It participates in purine metabolism; AMP biosynthesis via de novo pathway; AMP from IMP: step 1/2. In terms of biological role, plays an important role in the de novo pathway of purine nucleotide biosynthesis. Catalyzes the first committed step in the biosynthesis of AMP from IMP. In Caldanaerobacter subterraneus subsp. tengcongensis (strain DSM 15242 / JCM 11007 / NBRC 100824 / MB4) (Thermoanaerobacter tengcongensis), this protein is Adenylosuccinate synthetase.